A 192-amino-acid polypeptide reads, in one-letter code: MDTSRLTLDHFLSRFQLLRPQITHETLNQRQAAVLIPVVRRPQPGLLLTQRAIHLRKHAGQVAFPGGAVDSTDASLIAAALREAQEEVAIPPQAVEVIGVLPPVDSVTGFQVTPVVGIIPPNLPWRASEDEVSAVFEMPLAQALQLGRYHPLDVYRRGNSHRVWLSWYEHYFVWGMTANILRELALQIGVKP.

The Nudix hydrolase domain occupies 29-160; it reads QRQAAVLIPV…PLDVYRRGNS (132 aa). The Nudix box signature appears at 67–89; the sequence is GAVDSTDASLIAAALREAQEEVA. The Mg(2+) site is built by glutamate 83 and glutamate 87.

Belongs to the Nudix hydrolase family. PCD1 subfamily. It depends on Mn(2+) as a cofactor. The cofactor is Mg(2+).

Functionally, probably mediates the hydrolysis of some nucleoside diphosphate derivatives. This is an uncharacterized protein from Salmonella agona (strain SL483).